The chain runs to 180 residues: Large ribosomal subunit protein uL6 (180 aa).

It belongs to the universal ribosomal protein uL6 family. Part of the 50S ribosomal subunit.

This protein binds to the 23S rRNA, and is important in its secondary structure. It is located near the subunit interface in the base of the L7/L12 stalk, and near the tRNA binding site of the peptidyltransferase center. The protein is Large ribosomal subunit protein uL6 of Caldanaerobacter subterraneus subsp. tengcongensis (strain DSM 15242 / JCM 11007 / NBRC 100824 / MB4) (Thermoanaerobacter tengcongensis).